Consider the following 152-residue polypeptide: UPF0260 protein BR1477/BS1330_I1471 (152 aa).

Belongs to the UPF0260 family.

The protein is UPF0260 protein BR1477/BS1330_I1471 of Brucella suis biovar 1 (strain 1330).